A 171-amino-acid chain; its full sequence is Co-chaperone protein HscB (171 aa).

In terms of domain architecture, J spans 2–74 (DYFTLFGLPA…LTRAEYLLSL (73 aa)).

The protein belongs to the HscB family. As to quaternary structure, interacts with HscA and stimulates its ATPase activity. Interacts with IscU.

In terms of biological role, co-chaperone involved in the maturation of iron-sulfur cluster-containing proteins. Seems to help targeting proteins to be folded toward HscA. In Klebsiella pneumoniae subsp. pneumoniae (strain ATCC 700721 / MGH 78578), this protein is Co-chaperone protein HscB.